A 156-amino-acid polypeptide reads, in one-letter code: Calglandulin (156 aa).

4 EF-hand domains span residues 8–43, 44–79, 82–117, and 118–153; these read EQIT…VGIN, PTKR…YHEK, NQDE…AGEP, and LNEQ…ESFK. Aspartate 131, aspartate 133, aspartate 135, threonine 137, and glutamate 142 together coordinate Ca(2+).

This sequence belongs to the calmodulin family. Calglandulin subfamily. In terms of tissue distribution, expressed by the venom gland.

Its subcellular location is the cytoplasm. Functionally, may be involved in the cellular control mechanism of the secretion of toxins from the gland into the venom. In Bothrops insularis (Golden lancehead), this protein is Calglandulin.